The following is a 359-amino-acid chain: MSTENTLSVADLARENVRNLVPYQSARRLGGNGDVWLNANEFPTAVEFQLTQQTLNRYPECQPKAVIENYAQYAGVKPEQVLVSRGADEGIELVIRAFCEPGKDAILYCPPTYGMYSVSAETIGVERRTVPALENWQLDLQGISDNLDGAKVVFVCSPNNPTGQLINPQDLRTLLELTRGKAIVVADEAYIEFCPQATLTGWLVEYPHLVILRTLSKAFALAGLRCGFTLANEEVINLLLKVIAPYPLSTPVADIAAQALSPQGINAMRDRVAQTVQERQYLVNALQQTACVEHVFDSETNYILARFTASSSVFKSLWDQGIILRDQNKQPSLSGCLRITVGTRQENQRVIDALRAEPV.

At lysine 217 the chain carries N6-(pyridoxal phosphate)lysine.

The protein belongs to the class-II pyridoxal-phosphate-dependent aminotransferase family. Histidinol-phosphate aminotransferase subfamily. In terms of assembly, homodimer. The cofactor is pyridoxal 5'-phosphate.

The catalysed reaction is L-histidinol phosphate + 2-oxoglutarate = 3-(imidazol-4-yl)-2-oxopropyl phosphate + L-glutamate. The protein operates within amino-acid biosynthesis; L-histidine biosynthesis; L-histidine from 5-phospho-alpha-D-ribose 1-diphosphate: step 7/9. This is Histidinol-phosphate aminotransferase from Salmonella newport (strain SL254).